A 94-amino-acid polypeptide reads, in one-letter code: Small ribosomal subunit protein uS19c (94 aa).

This sequence belongs to the universal ribosomal protein uS19 family.

Its subcellular location is the plastid. The protein resides in the chloroplast. Its function is as follows. Protein S19 forms a complex with S13 that binds strongly to the 16S ribosomal RNA. The sequence is that of Small ribosomal subunit protein uS19c from Cyanidioschyzon merolae (strain NIES-3377 / 10D) (Unicellular red alga).